The chain runs to 462 residues: Argininosuccinate lyase (462 aa).

This sequence belongs to the lyase 1 family. Argininosuccinate lyase subfamily.

It localises to the cytoplasm. The enzyme catalyses 2-(N(omega)-L-arginino)succinate = fumarate + L-arginine. The protein operates within amino-acid biosynthesis; L-arginine biosynthesis; L-arginine from L-ornithine and carbamoyl phosphate: step 3/3. In Prochlorococcus marinus (strain SARG / CCMP1375 / SS120), this protein is Argininosuccinate lyase.